A 154-amino-acid chain; its full sequence is IQ domain-containing protein F3 (154 aa).

The region spanning 89 to 118 (QEQATVKLQSCIRMWQCRQCYRQMCNALCL) is the IQ domain.

This chain is IQ domain-containing protein F3 (IQCF3), found in Homo sapiens (Human).